The sequence spans 264 residues: Thiazole synthase (264 aa).

Lys101 serves as the catalytic Schiff-base intermediate with DXP. Residues Gly162, 189 to 190 (AG), and 211 to 212 (NT) contribute to the 1-deoxy-D-xylulose 5-phosphate site. The tract at residues 245–264 (KRQTASPSTPTLGQPFWHNQ) is disordered.

This sequence belongs to the ThiG family. Homotetramer. Forms heterodimers with either ThiH or ThiS.

The protein localises to the cytoplasm. The catalysed reaction is [ThiS sulfur-carrier protein]-C-terminal-Gly-aminoethanethioate + 2-iminoacetate + 1-deoxy-D-xylulose 5-phosphate = [ThiS sulfur-carrier protein]-C-terminal Gly-Gly + 2-[(2R,5Z)-2-carboxy-4-methylthiazol-5(2H)-ylidene]ethyl phosphate + 2 H2O + H(+). Its pathway is cofactor biosynthesis; thiamine diphosphate biosynthesis. Its function is as follows. Catalyzes the rearrangement of 1-deoxy-D-xylulose 5-phosphate (DXP) to produce the thiazole phosphate moiety of thiamine. Sulfur is provided by the thiocarboxylate moiety of the carrier protein ThiS. In vitro, sulfur can be provided by H(2)S. This chain is Thiazole synthase, found in Cellvibrio japonicus (strain Ueda107) (Pseudomonas fluorescens subsp. cellulosa).